Reading from the N-terminus, the 292-residue chain is Ribosomal RNA small subunit methyltransferase A (292 aa).

The S-adenosyl-L-methionine site is built by Asn29, Leu31, Gly56, Glu77, Asp102, and Asn127.

It belongs to the class I-like SAM-binding methyltransferase superfamily. rRNA adenine N(6)-methyltransferase family. RsmA subfamily.

Its subcellular location is the cytoplasm. It carries out the reaction adenosine(1518)/adenosine(1519) in 16S rRNA + 4 S-adenosyl-L-methionine = N(6)-dimethyladenosine(1518)/N(6)-dimethyladenosine(1519) in 16S rRNA + 4 S-adenosyl-L-homocysteine + 4 H(+). Specifically dimethylates two adjacent adenosines (A1518 and A1519) in the loop of a conserved hairpin near the 3'-end of 16S rRNA in the 30S particle. May play a critical role in biogenesis of 30S subunits. The sequence is that of Ribosomal RNA small subunit methyltransferase A from Bacillus licheniformis (strain ATCC 14580 / DSM 13 / JCM 2505 / CCUG 7422 / NBRC 12200 / NCIMB 9375 / NCTC 10341 / NRRL NRS-1264 / Gibson 46).